A 331-amino-acid chain; its full sequence is tRNA N6-adenosine threonylcarbamoyltransferase (331 aa).

Residues His109, His113, and Tyr130 each coordinate Fe cation. Substrate-binding positions include Tyr130–Gly134, Asp162, Asp183, and Ser262. Asp290 lines the Fe cation pocket.

It belongs to the KAE1 / TsaD family. Requires Fe(2+) as cofactor.

It is found in the cytoplasm. It catalyses the reaction L-threonylcarbamoyladenylate + adenosine(37) in tRNA = N(6)-L-threonylcarbamoyladenosine(37) in tRNA + AMP + H(+). Its function is as follows. Required for the formation of a threonylcarbamoyl group on adenosine at position 37 (t(6)A37) in tRNAs that read codons beginning with adenine. Is probably involved in the transfer of the threonylcarbamoyl moiety of threonylcarbamoyl-AMP (TC-AMP) to the N6 group of A37. The protein is tRNA N6-adenosine threonylcarbamoyltransferase of Saccharolobus islandicus (strain M.16.27) (Sulfolobus islandicus).